A 110-amino-acid polypeptide reads, in one-letter code: uncharacterized protein (110 aa).

This sequence belongs to the HesB/IscA family.

This is an uncharacterized protein from Rickettsia prowazekii (strain Madrid E).